We begin with the raw amino-acid sequence, 127 residues long: MPLAILLSLLRHCGVRAALPTPRHLHTSPWRADCSRASLTRLRRQAYARLYPVLLVKQDGSTIHIRYREPRRMLAMPLDLDALSPEERRARFRKREAQLQQKREEEPEVVDSFDTERYKQFWTKTKK.

The transit peptide at 1–32 directs the protein to the mitochondrion; that stretch reads MPLAILLSLLRHCGVRAALPTPRHLHTSPWRA. A Phosphoserine modification is found at Ser-84.

It belongs to the mitochondrion-specific ribosomal protein mL55 family. In terms of assembly, component of the mitochondrial ribosome large subunit (39S) which comprises a 16S rRNA and about 50 distinct proteins.

It is found in the mitochondrion. This chain is Large ribosomal subunit protein mL55 (Mrpl55), found in Mus musculus (Mouse).